The primary structure comprises 164 residues: Lipoprotein signal peptidase (164 aa).

Helical transmembrane passes span 11–31 (YWVLALAAIVLDQWSKWAVLS), 41–61 (VIPSFFDLTLVYNPGAAFSFL), 64–84 (QGGWQKYFFLVLAVAVSAYLV), and 92–112 (FATLGKTGAAMIIGGALGNVI). Catalysis depends on residues aspartate 122 and aspartate 140. A helical membrane pass occupies residues 132-152 (FYPAFNIADSFICVGAVLAVL).

It belongs to the peptidase A8 family.

The protein resides in the cell inner membrane. The enzyme catalyses Release of signal peptides from bacterial membrane prolipoproteins. Hydrolyzes -Xaa-Yaa-Zaa-|-(S,diacylglyceryl)Cys-, in which Xaa is hydrophobic (preferably Leu), and Yaa (Ala or Ser) and Zaa (Gly or Ala) have small, neutral side chains.. It participates in protein modification; lipoprotein biosynthesis (signal peptide cleavage). Its function is as follows. This protein specifically catalyzes the removal of signal peptides from prolipoproteins. This Neisseria meningitidis serogroup C (strain 053442) protein is Lipoprotein signal peptidase.